A 274-amino-acid polypeptide reads, in one-letter code: Large ribosomal subunit protein uL2 (274 aa).

The disordered stretch occupies residues 214–274; sequence LGRRPRTRPV…NKYIVERRKK (61 aa).

Belongs to the universal ribosomal protein uL2 family. As to quaternary structure, part of the 50S ribosomal subunit. Forms a bridge to the 30S subunit in the 70S ribosome.

One of the primary rRNA binding proteins. Required for association of the 30S and 50S subunits to form the 70S ribosome, for tRNA binding and peptide bond formation. It has been suggested to have peptidyltransferase activity; this is somewhat controversial. Makes several contacts with the 16S rRNA in the 70S ribosome. The protein is Large ribosomal subunit protein uL2 of Flavobacterium johnsoniae (strain ATCC 17061 / DSM 2064 / JCM 8514 / BCRC 14874 / CCUG 350202 / NBRC 14942 / NCIMB 11054 / UW101) (Cytophaga johnsonae).